The primary structure comprises 877 residues: Translation initiation factor IF-2 (877 aa).

The interval 48–289 (SSFQNSAPAE…QITKRKERPL (242 aa)) is disordered. The span at 78–89 (RKNEKKPEENNT) shows a compositional bias: basic and acidic residues. The segment covering 92-101 (KSNRRRNNKR) has biased composition (basic residues). Residues 102–116 (RSSDRARDNKERDAK) show a composition bias toward basic and acidic residues. Residues 123-132 (KAAALLQQFK) show a composition bias toward low complexity. Basic and acidic residues-rich tracts occupy residues 135–155 (QRAE…EYHE) and 162–189 (KEQS…EKKV). The span at 277–286 (PRKQITKRKE) shows a compositional bias: basic residues. A tr-type G domain is found at 378–547 (KRPPVVTIMG…LLQADVMELK (170 aa)). The interval 387–394 (GHVDHGKT) is G1. 387–394 (GHVDHGKT) is a binding site for GTP. The segment at 412–416 (GITQR) is G2. The segment at 433 to 436 (DTPG) is G3. GTP-binding positions include 433–437 (DTPGH) and 487–490 (NKMD). The tract at residues 487–490 (NKMD) is G4. The tract at residues 523-525 (SAK) is G5.

It belongs to the TRAFAC class translation factor GTPase superfamily. Classic translation factor GTPase family. IF-2 subfamily.

The protein localises to the cytoplasm. Functionally, one of the essential components for the initiation of protein synthesis. Protects formylmethionyl-tRNA from spontaneous hydrolysis and promotes its binding to the 30S ribosomal subunits. Also involved in the hydrolysis of GTP during the formation of the 70S ribosomal complex. This chain is Translation initiation factor IF-2, found in Lactobacillus acidophilus (strain ATCC 700396 / NCK56 / N2 / NCFM).